We begin with the raw amino-acid sequence, 768 residues long: Integrin beta-8 (768 aa).

The N-terminal stretch at 1-42 is a signal peptide; it reads MCGSALGLPPAAFVRLRSCRPGPAAFLRAAWVLSLVLGLGRS. Residues 43–683 lie on the Extracellular side of the membrane; sequence ENSRCASSHA…ECFSSPSYLR (641 aa). In terms of domain architecture, PSI spans 46–95; the sequence is RCASSHAVSCSECLALGPDCGWCVHEDFISGGPRSERCDIVSNLISKGCP. Disulfide bonds link Cys-47–Cys-65, Cys-55–Cys-469, Cys-58–Cys-83, Cys-68–Cys-94, Cys-211–Cys-218, Cys-266–Cys-307, Cys-407–Cys-419, Cys-439–Cys-467, Cys-471–Cys-491, Cys-471–Cys-494, Cys-481–Cys-494, Cys-499–Cys-528, Cys-511–Cys-526, Cys-520–Cys-531, Cys-533–Cys-546, Cys-553–Cys-567, Cys-561–Cys-572, Cys-574–Cys-583, Cys-585–Cys-609, Cys-593–Cys-607, Cys-601–Cys-612, Cys-614–Cys-624, Cys-627–Cys-630, Cys-634–Cys-661, and Cys-640–Cys-657. A VWFA domain is found at 146-384; that stretch reads PVDLYYLVDV…NLVVEAYQKL (239 aa). Mg(2+)-binding residues include Asp-154 and Ser-156. A Ca(2+)-binding site is contributed by Asp-193. Residue Asn-233 is glycosylated (N-linked (GlcNAc...) asparagine). Positions 249, 251, 253, and 254 each coordinate Ca(2+). Glu-254 is a binding site for Mg(2+). Residue Asn-402 is glycosylated (N-linked (GlcNAc...) asparagine). Asn-421, Asn-431, and Asn-456 each carry an N-linked (GlcNAc...) asparagine glycan. 4 I-EGF domains span residues 471-495, 499-547, 548-584, and 585-625; these read CEASRGGAAKCAEEAPLDSTCPQCQ, CHQE…KYCE, KDDFSCPYHHGSLCAGHGECEAGRCQCFSGWEGDRCQ, and CPSA…RFCE. Asn-648 carries an N-linked (GlcNAc...) asparagine glycan. Residues 684–703 traverse the membrane as a helical segment; that stretch reads IFFIIFIVTFLIGLLKILII. Residues 704–768 lie on the Cytoplasmic side of the membrane; sequence RQVILQWNSS…NAHETFRCNF (65 aa).

Belongs to the integrin beta chain family. As to quaternary structure, heterodimer of an alpha and a beta subunit. Beta-8 (ITGB8) associates with alpha-V (ITGAV) to form ITGAV:ITGB8. ITGAV:ITGB8 interacts with TGFB1. Placenta, kidney, brain, ovary, uterus and in several transformed cells.

The protein localises to the cell membrane. Functionally, integrin alpha-V:beta-8 (ITGAV:ITGB8) is a receptor for fibronectin. It recognizes the sequence R-G-D in its ligands. Integrin alpha-V:beta-6 (ITGAV:ITGB6) mediates R-G-D-dependent release of transforming growth factor beta-1 (TGF-beta-1) from regulatory Latency-associated peptide (LAP), thereby playing a key role in TGF-beta-1 activation on the surface of activated regulatory T-cells (Tregs). Required during vasculogenesis. The sequence is that of Integrin beta-8 (ITGB8) from Oryctolagus cuniculus (Rabbit).